The sequence spans 199 residues: Imidazoleglycerol-phosphate dehydratase (199 aa).

It belongs to the imidazoleglycerol-phosphate dehydratase family.

The protein localises to the cytoplasm. The catalysed reaction is D-erythro-1-(imidazol-4-yl)glycerol 3-phosphate = 3-(imidazol-4-yl)-2-oxopropyl phosphate + H2O. It participates in amino-acid biosynthesis; L-histidine biosynthesis; L-histidine from 5-phospho-alpha-D-ribose 1-diphosphate: step 6/9. In Kineococcus radiotolerans (strain ATCC BAA-149 / DSM 14245 / SRS30216), this protein is Imidazoleglycerol-phosphate dehydratase.